A 180-amino-acid chain; its full sequence is Large ribosomal subunit protein uL6 (180 aa).

The protein belongs to the universal ribosomal protein uL6 family. In terms of assembly, part of the 50S ribosomal subunit.

Functionally, this protein binds to the 23S rRNA, and is important in its secondary structure. It is located near the subunit interface in the base of the L7/L12 stalk, and near the tRNA binding site of the peptidyltransferase center. In Anaeromyxobacter dehalogenans (strain 2CP-1 / ATCC BAA-258), this protein is Large ribosomal subunit protein uL6.